A 535-amino-acid chain; its full sequence is Succinate-semialdehyde dehydrogenase, mitochondrial (535 aa).

A mitochondrion-targeting transit peptide spans Met1 to Tyr47. At Lys126 the chain carries N6-acetyllysine; alternate. At Lys126 the chain carries N6-succinyllysine; alternate. Lys135 and Lys184 each carry N6-succinyllysine. Thr202–Trp204 contributes to the NAD(+) binding site. Arg213 lines the substrate pocket. Position 228–231 (Lys228–Glu231) interacts with NAD(+). An N6-acetyllysine; alternate modification is found at Lys265. Lys265 carries the N6-succinyllysine; alternate modification. Residues Gly284–Gly289 and Glu306 contribute to the NAD(+) site. The Proton acceptor role is filled by Glu306. Arg334 is a substrate binding site. The Nucleophile role is filled by Cys340. Cys340 and Cys342 are disulfide-bonded. At Lys365 the chain carries N6-acetyllysine. At Lys402 the chain carries N6-succinyllysine. An N6-acetyllysine modification is found at Lys411. Glu438–Phe440 lines the NAD(+) pocket. Residue Ser498 coordinates substrate. The residue at position 499 (Ser499) is a Phosphoserine.

Belongs to the aldehyde dehydrogenase family. In terms of assembly, homotetramer. In terms of tissue distribution, brain, pancreas, heart, liver, skeletal muscle and kidney. Lower in placenta.

The protein resides in the mitochondrion. The enzyme catalyses succinate semialdehyde + NAD(+) + H2O = succinate + NADH + 2 H(+). It participates in amino-acid degradation; 4-aminobutanoate degradation. Its activity is regulated as follows. Redox-regulated. Inhibited under oxydizing conditions. Inhibited by hydrogen peroxide H(2)O(2). In terms of biological role, catalyzes one step in the degradation of the inhibitory neurotransmitter gamma-aminobutyric acid (GABA). The polypeptide is Succinate-semialdehyde dehydrogenase, mitochondrial (Homo sapiens (Human)).